Consider the following 707-residue polypeptide: Lipase maturation factor 2 (707 aa).

10 consecutive transmembrane segments (helical) span residues 10-30 (LFLQGVAAVFMFAFASLYTQI), 78-98 (LELLSLLGALVALGALLLSPL), 102-122 (VIYLLLWAAYLSACQVGQVFL), 123-143 (YFQWDSLLLETGFLAVLVAPL), 165-185 (DLPFWLVRWLLFRLMFASGVV), 227-247 (LSVVATFLIEIAVPPLFFAPI), 259-279 (VLLQVLIIITGNYNFFNLMTL), 310-330 (ALLATLSLLLELAVYGLLAYG), 364-384 (LTLPTVWLGVASLVWELLSAL), and 399-419 (AVVQLSLVGTATVALFLISLV). 2 N-linked (GlcNAc...) asparagine glycosylation sites follow: Asn-489 and Asn-616. A helical membrane pass occupies residues 637-657 (ALLWGLLMAVGAVRFVQALLA). Residues 665–707 (PLAPVSGEKRRPASQKDSGAASEQATAAPNPCSSSSRTTRRKK) form a disordered region. Positions 679 to 691 (QKDSGAASEQATA) are enriched in polar residues.

The protein belongs to the lipase maturation factor family.

It localises to the endoplasmic reticulum membrane. Its function is as follows. Involved in the maturation of specific proteins in the endoplasmic reticulum. May be required for maturation and transport of active lipoprotein lipase (LPL) through the secretory pathway. The polypeptide is Lipase maturation factor 2 (LMF2) (Homo sapiens (Human)).